A 236-amino-acid chain; its full sequence is Cysteine-rich venom protein TRI1 (236 aa).

Positions 1–18 (MIVFILLSLAAVLEQSFG) are cleaved as a signal peptide. Positions 37 to 165 (VDRHNSFRRS…GYSYFYVCQY (129 aa)) constitute an SCP domain. Intrachain disulfides connect Cys74–Cys152, Cys91–Cys166, Cys147–Cys163, Cys185–Cys192, Cys188–Cys197, Cys201–Cys234, Cys210–Cys228, and Cys219–Cys232. Residues 201–234 (CLREDKFTNCKSLVQQNSCQHDWTRKNCPATCFC) enclose the ShKT domain.

Belongs to the CRISP family. Expressed by the venom gland.

Its subcellular location is the secreted. Blocks contraction of smooth muscle elicited by high potassium-induced depolarization, but does not block caffeine-stimulated contraction. May target voltage-gated calcium channels on smooth muscle. This is Cysteine-rich venom protein TRI1 from Trimorphodon biscutatus (Western lyre snake).